A 946-amino-acid polypeptide reads, in one-letter code: Inter-alpha-trypsin inhibitor heavy chain H2 (946 aa).

Residues 1 to 18 form the signal peptide; it reads MKRLTCFFICFFLSEVSG. Residues 19–54 constitute a propeptide that is removed on maturation; sequence FEIPINGLSEFVDYEDLVELAPGKFQLVAENRRYQR. The 130-residue stretch at 56–185 folds into the VIT domain; that stretch reads LPGESEEMME…KVQFELHYQE (130 aa). A Phosphoserine; by FAM20C modification is found at serine 60. Asparagine 118 carries an N-linked (GlcNAc...) (complex) asparagine glycan. Residues cysteine 261 and cysteine 264 are joined by a disulfide bond. 4-carboxyglutamate occurs at positions 282 and 283. Residues 308 to 468 form the VWFA domain; that stretch reads PKNILFVIDV…YDFLKRLSNE (161 aa). A glycan (N-linked (GlcNAc...) asparagine) is linked at asparagine 445. The residue at position 466 (serine 466) is a Phosphoserine; by FAM20C. Cysteine 650 and cysteine 651 are disulfide-bonded. An O-glycosylated at three sites region spans residues 665–679; that stretch reads STPSWANPSPTPVIS. Threonine 666 carries an O-linked (GalNAc...) threonine; partial glycan. Serine 673 is a glycosylation site (O-linked (GalNAc...) serine). O-linked (GalNAc...) threonine glycosylation is found at threonine 675 and threonine 691. Aspartate 702 carries the aspartate 1-(chondroitin 4-sulfate)-ester modification. Positions 703 to 946 are excised as a propeptide; that stretch reads PHFIIYLPKS…PQLYSFLKRP (244 aa). Serine 886 bears the Phosphoserine; by FAM20C mark.

I-alpha-I plasma protease inhibitors are assembled from one or two heavy chains (HC) and one light chain, bikunin. Inter-alpha-inhibitor (I-alpha-I) is composed of ITIH1/HC1, ITIH2/HC2 and bikunin. Post-translationally, heavy chains are linked to bikunin via chondroitin 4-sulfate esterified to the alpha-carboxyl of the C-terminal aspartate after propeptide cleavage. N- and O-glycosylated. O-glycosylated with core 1 or possibly core 8 glycans. In terms of processing, phosphorylated by FAM20C in the extracellular medium. As to expression, plasma.

The protein localises to the secreted. Functionally, may act as a carrier of hyaluronan in serum or as a binding protein between hyaluronan and other matrix protein, including those on cell surfaces in tissues to regulate the localization, synthesis and degradation of hyaluronan which are essential to cells undergoing biological processes. In Homo sapiens (Human), this protein is Inter-alpha-trypsin inhibitor heavy chain H2 (ITIH2).